An 88-amino-acid chain; its full sequence is Small ribosomal subunit protein uS17 (88 aa).

This sequence belongs to the universal ribosomal protein uS17 family. In terms of assembly, part of the 30S ribosomal subunit.

In terms of biological role, one of the primary rRNA binding proteins, it binds specifically to the 5'-end of 16S ribosomal RNA. This is Small ribosomal subunit protein uS17 from Yersinia pseudotuberculosis serotype O:1b (strain IP 31758).